Reading from the N-terminus, the 186-residue chain is Ribosome-recycling factor (186 aa).

It belongs to the RRF family.

Its subcellular location is the cytoplasm. Functionally, responsible for the release of ribosomes from messenger RNA at the termination of protein biosynthesis. May increase the efficiency of translation by recycling ribosomes from one round of translation to another. This chain is Ribosome-recycling factor, found in Paraburkholderia xenovorans (strain LB400).